Consider the following 517-residue polypeptide: MARLTLRPHNHFFSSPIYAHKQPFLSVYTIFPHHHQNPLIKSRVKCSASGTERVRESKKLPPKDPIEDPKPQLPIPEVLSTETGFEQNWPPWKNIPQRYKLIGATSLAFVICNMDKVNLSIAIIPMSHQFGWSSSVAGLVQSSFFWGYALSQLPGGWLSKIFGGRKVLEIGVFTWSFATALVPLLAGFMPGLIFSRILVGIGEGVSPSAATDLIARTIPVKERSRAVGFVFGGLSLGSVMGLLLAPPIIETFNWESVFYLFGLLGVGWFVGFQFLNEEEVSYKGNEISTSHKSENATKEELGSSLKEIPWKSFFQSPAVWAMIYTHFCGSWGHYTCLSWLPTYFSEALSLNLTEAAWVSILPPLASIVVTSLASQFADYLITNGVDTTTVRKICQTIAFVAPAICMTLSSVDIGLPPWEIVGILTAGLALSSFALSGLYCTHQDISPEYASILLGITNTVGAVPGIVGVALTGFLLDSTHSWTMSLFVPSIFFYLTGTVVWLAFASSEPQTFRKEDS.

Residues 51 to 73 form a disordered region; it reads TERVRESKKLPPKDPIEDPKPQL. Positions 52–70 are enriched in basic and acidic residues; sequence ERVRESKKLPPKDPIEDPK. 10 consecutive transmembrane segments (helical) span residues 130–150, 170–190, 229–249, 255–275, 312–332, 352–372, 397–417, 420–440, 452–472, and 484–504; these read FGWS…GYAL, IGVF…GFMP, FVFG…PPII, ESVF…FQFL, SFFQ…GSWG, LTEA…VTSL, IAFV…GLPP, IVGI…GLYC, ILLG…VALT, and MSLF…WLAF.

Belongs to the major facilitator superfamily. Sodium/anion cotransporter (TC 2.A.1.14) family. Expressed in leaf veins and sepals.

It is found in the plastid. It localises to the chloroplast membrane. Functionally, inorganic phosphate and probable anion transporter. The polypeptide is Probable anion transporter 6, chloroplastic (ANTR6) (Arabidopsis thaliana (Mouse-ear cress)).